The sequence spans 252 residues: Protein PYRAB15930 (252 aa).

This sequence belongs to the CinA family.

The chain is Protein PYRAB15930 from Pyrococcus abyssi (strain GE5 / Orsay).